The following is a 409-amino-acid chain: Tyrosine--tRNA ligase (409 aa).

Residue Y35 participates in L-tyrosine binding. Positions 40-49 (PTGSSLHVGH) match the 'HIGH' region motif. L-tyrosine-binding residues include Y168 and Q172. Positions 228–232 (KMGKT) match the 'KMSKS' region motif. K231 serves as a coordination point for ATP. The 66-residue stretch at 339-404 (IKVTDLFVQV…AGKKRVVRIV (66 aa)) folds into the S4 RNA-binding domain.

It belongs to the class-I aminoacyl-tRNA synthetase family. TyrS type 1 subfamily. In terms of assembly, homodimer.

Its subcellular location is the cytoplasm. It catalyses the reaction tRNA(Tyr) + L-tyrosine + ATP = L-tyrosyl-tRNA(Tyr) + AMP + diphosphate + H(+). Its function is as follows. Catalyzes the attachment of tyrosine to tRNA(Tyr) in a two-step reaction: tyrosine is first activated by ATP to form Tyr-AMP and then transferred to the acceptor end of tRNA(Tyr). This Treponema pallidum (strain Nichols) protein is Tyrosine--tRNA ligase.